Here is a 95-residue protein sequence, read N- to C-terminus: Acylphosphatase (95 aa).

One can recognise an Acylphosphatase-like domain in the interval 5–93 (RAHLFIRGKV…GEFQDFRILP (89 aa)). Catalysis depends on residues arginine 20 and asparagine 38.

The protein belongs to the acylphosphatase family.

The enzyme catalyses an acyl phosphate + H2O = a carboxylate + phosphate + H(+). The protein is Acylphosphatase (acyP) of Pyrobaculum arsenaticum (strain DSM 13514 / JCM 11321 / PZ6).